Reading from the N-terminus, the 350-residue chain is UDP-3-O-acylglucosamine N-acyltransferase (350 aa).

The active-site Proton acceptor is the histidine 257.

It belongs to the transferase hexapeptide repeat family. LpxD subfamily. As to quaternary structure, homotrimer.

The catalysed reaction is a UDP-3-O-[(3R)-3-hydroxyacyl]-alpha-D-glucosamine + a (3R)-hydroxyacyl-[ACP] = a UDP-2-N,3-O-bis[(3R)-3-hydroxyacyl]-alpha-D-glucosamine + holo-[ACP] + H(+). The protein operates within bacterial outer membrane biogenesis; LPS lipid A biosynthesis. Functionally, catalyzes the N-acylation of UDP-3-O-acylglucosamine using 3-hydroxyacyl-ACP as the acyl donor. Is involved in the biosynthesis of lipid A, a phosphorylated glycolipid that anchors the lipopolysaccharide to the outer membrane of the cell. The protein is UDP-3-O-acylglucosamine N-acyltransferase of Chelativorans sp. (strain BNC1).